Consider the following 402-residue polypeptide: Imidazolonepropionase (402 aa).

Fe(3+) is bound by residues H66 and H68. Residues H66 and H68 each coordinate Zn(2+). 4-imidazolone-5-propanoate contacts are provided by R75, Y138, and H171. Y138 serves as a coordination point for N-formimidoyl-L-glutamate. Residue H236 participates in Fe(3+) binding. H236 is a Zn(2+) binding site. A 4-imidazolone-5-propanoate-binding site is contributed by Q239. Fe(3+) is bound at residue D311. D311 is a binding site for Zn(2+). Positions 313 and 315 each coordinate N-formimidoyl-L-glutamate. Residue T316 participates in 4-imidazolone-5-propanoate binding.

It belongs to the metallo-dependent hydrolases superfamily. HutI family. The cofactor is Zn(2+). Requires Fe(3+) as cofactor.

It localises to the cytoplasm. It carries out the reaction 4-imidazolone-5-propanoate + H2O = N-formimidoyl-L-glutamate. It participates in amino-acid degradation; L-histidine degradation into L-glutamate; N-formimidoyl-L-glutamate from L-histidine: step 3/3. Catalyzes the hydrolytic cleavage of the carbon-nitrogen bond in imidazolone-5-propanoate to yield N-formimidoyl-L-glutamate. It is the third step in the universal histidine degradation pathway. The sequence is that of Imidazolonepropionase from Pseudomonas aeruginosa (strain ATCC 15692 / DSM 22644 / CIP 104116 / JCM 14847 / LMG 12228 / 1C / PRS 101 / PAO1).